Here is a 519-residue protein sequence, read N- to C-terminus: 3-octaprenyl-4-hydroxybenzoate carboxy-lyase (519 aa).

Residue N177 coordinates Mn(2+). Prenylated FMN is bound by residues 180–182 (IYR), 194–196 (RWL), and 199–200 (RG). E243 contributes to the Mn(2+) binding site. The Proton donor role is filled by D318.

The protein belongs to the UbiD family. As to quaternary structure, homohexamer. It depends on prenylated FMN as a cofactor. Requires Mn(2+) as cofactor.

It is found in the cell membrane. It carries out the reaction a 4-hydroxy-3-(all-trans-polyprenyl)benzoate + H(+) = a 2-(all-trans-polyprenyl)phenol + CO2. It participates in cofactor biosynthesis; ubiquinone biosynthesis. Functionally, catalyzes the decarboxylation of 3-octaprenyl-4-hydroxy benzoate to 2-octaprenylphenol, an intermediate step in ubiquinone biosynthesis. The polypeptide is 3-octaprenyl-4-hydroxybenzoate carboxy-lyase (Burkholderia pseudomallei (strain 1710b)).